A 145-amino-acid chain; its full sequence is MIALIQRVTRASVTVEDEVTGKIGPGLLVLLGVEKEDDEQKANRLCERVLGYRIFSDVDGKMNLNVQQAGGSVLVVSQFTLAADTERGMRPSFSGGAAPDRAQALYEYFVERCRQQAINTQTGRFAADMQVELVNDGPVTFWLQV.

The short motif at 137–138 (GP) is the Gly-cisPro motif, important for rejection of L-amino acids element.

This sequence belongs to the DTD family. In terms of assembly, homodimer.

Its subcellular location is the cytoplasm. It carries out the reaction glycyl-tRNA(Ala) + H2O = tRNA(Ala) + glycine + H(+). It catalyses the reaction a D-aminoacyl-tRNA + H2O = a tRNA + a D-alpha-amino acid + H(+). Functionally, an aminoacyl-tRNA editing enzyme that deacylates mischarged D-aminoacyl-tRNAs. Also deacylates mischarged glycyl-tRNA(Ala), protecting cells against glycine mischarging by AlaRS. Acts via tRNA-based rather than protein-based catalysis; rejects L-amino acids rather than detecting D-amino acids in the active site. By recycling D-aminoacyl-tRNA to D-amino acids and free tRNA molecules, this enzyme counteracts the toxicity associated with the formation of D-aminoacyl-tRNA entities in vivo and helps enforce protein L-homochirality. The sequence is that of D-aminoacyl-tRNA deacylase from Salmonella typhi.